Reading from the N-terminus, the 261-residue chain is Oligodendrocyte transcription factor 1 (261 aa).

The tract at residues 41–105 (PPISSSSSTS…LRRKINSRER (65 aa)) is disordered. Positions 44 to 56 (SSSSSTSSSSTAS) are enriched in low complexity. The 60-residue stretch at 95 to 154 (QLRRKINSRERKRMQDLNLAMDALREVILPYSAAHCQGAPGRKLSKIATLLLARNYILLL) folds into the bHLH domain.

As to expression, expressed specifically in the brain, including the corpus callosum, hippocampal and cerebral white matter. Also detected in cells scattered in gray matter, most probably in oligodendrocytes.

The protein localises to the nucleus. Promotes formation and maturation of oligodendrocytes, especially within the brain. Cooperates with OLIG2 to establish the pMN domain of the embryonic neural tube. The polypeptide is Oligodendrocyte transcription factor 1 (Olig1) (Rattus norvegicus (Rat)).